A 176-amino-acid chain; its full sequence is NADH-quinone oxidoreductase subunit I 1 (176 aa).

2 consecutive 4Fe-4S ferredoxin-type domains span residues 45 to 77 and 87 to 116; these read IVLT…MEAT and RWFR…MTPD. 8 residues coordinate [4Fe-4S] cluster: Cys-57, Cys-60, Cys-63, Cys-67, Cys-96, Cys-99, Cys-102, and Cys-106.

The protein belongs to the complex I 23 kDa subunit family. As to quaternary structure, NDH-1 is composed of 14 different subunits. Subunits NuoA, H, J, K, L, M, N constitute the membrane sector of the complex. [4Fe-4S] cluster is required as a cofactor.

Its subcellular location is the cell inner membrane. The catalysed reaction is a quinone + NADH + 5 H(+)(in) = a quinol + NAD(+) + 4 H(+)(out). In terms of biological role, NDH-1 shuttles electrons from NADH, via FMN and iron-sulfur (Fe-S) centers, to quinones in the respiratory chain. The immediate electron acceptor for the enzyme in this species is believed to be ubiquinone. Couples the redox reaction to proton translocation (for every two electrons transferred, four hydrogen ions are translocated across the cytoplasmic membrane), and thus conserves the redox energy in a proton gradient. The chain is NADH-quinone oxidoreductase subunit I 1 from Geobacter metallireducens (strain ATCC 53774 / DSM 7210 / GS-15).